We begin with the raw amino-acid sequence, 92 residues long: N(2)-fixation sustaining protein CowN (92 aa).

It belongs to the CowN family.

Its function is as follows. Is required to sustain N(2)-dependent growth in the presence of low levels of carbon monoxide (CO). Probably acts by protecting the N(2) fixation ability of the nitrogenase complex, which is inactivated in the presence of CO. The chain is N(2)-fixation sustaining protein CowN from Rhodopseudomonas palustris (strain ATCC BAA-98 / CGA009).